The chain runs to 530 residues: Glucocorticoid modulatory element-binding protein 2 (530 aa).

One can recognise an SAND domain in the interval 81 to 163; that stretch reads EEGENLEAEI…RKIMDSGELD (83 aa). Position 110 (C110) interacts with Zn(2+). DNA is bound by residues K136, K140, K143, and R154. Residue K155 forms a Glycyl lysine isopeptide (Lys-Gly) (interchain with G-Cter in SUMO1); alternate linkage. K155 participates in a covalent cross-link: Glycyl lysine isopeptide (Lys-Gly) (interchain with G-Cter in SUMO2); alternate. Zn(2+) contacts are provided by H167, C171, and C175. The stretch at 304-348 forms a coiled coil; it reads QMDRSREQYARDLAALEQQCDEHRRRAKELKHKSQHLSNVLMTLT. A Phosphoserine modification is found at S373.

As to quaternary structure, homodimer, and heterodimer of GMEB1 and GMEB2. GMEB1 and GMEB2 form the parvovirus initiator complex (PIF). Interacts with the glucocorticoid receptor (NR3C1). May interact with CREB-binding protein (CBP). Expressed in peripheral blood lymphocytes and fetal liver. Expressed preferentially in reproductive and/or developmentally important cells, such as testis, placenta, bone marrow and fetal tissues.

Its subcellular location is the nucleus. It is found in the cytoplasm. Its function is as follows. Trans-acting factor that binds to glucocorticoid modulatory elements (GME) present in the TAT (tyrosine aminotransferase) promoter and increases sensitivity to low concentrations of glucocorticoids. Also binds to the transferrin receptor promoter. Essential auxiliary factor for the replication of parvoviruses. In Homo sapiens (Human), this protein is Glucocorticoid modulatory element-binding protein 2 (GMEB2).